The primary structure comprises 486 residues: Hexosaminidase D (486 aa).

Glutamate 149 acts as the Proton donor in catalysis.

The protein belongs to the glycosyl hydrolase 20 family. In terms of assembly, homodimer; disulfide-linked. As to expression, expressed in synovial fibroblasts and synovial membranes.

It localises to the cytoplasm. The protein localises to the nucleus. Its subcellular location is the extracellular vesicle. The enzyme catalyses Hydrolysis of terminal non-reducing N-acetyl-D-hexosamine residues in N-acetyl-beta-D-hexosaminides.. With respect to regulation, inhibited by O-(2-acetamido-2-deoxy-D-glucopyranosylidene)amino N-phenylcarbamate (PUGNAc). Inhibited by galacto-NAG-thiazoline. Has hexosaminidase activity. Responsible for the cleavage of the monosaccharides N-acetylglucosamine (GlcNAc) and N-acetylgalactosamine (GalNAc) from cellular substrates. Has a preference for galactosaminide over glucosaminide substrates. This Homo sapiens (Human) protein is Hexosaminidase D.